Reading from the N-terminus, the 293-residue chain is Undecaprenyl-diphosphatase (293 aa).

The next 8 helical transmembrane spans lie at 3–23 (IALA…EFLP), 43–63 (KGKI…CWEF), 85–105 (ANVV…GKWI), 109–129 (LFNP…ILLA), 178–198 (FALV…MLFG), 203–223 (VATE…TVYE), 238–258 (IFAV…RWLL), and 269–289 (FAWY…SGLV).

This sequence belongs to the UppP family.

The protein localises to the cell inner membrane. It catalyses the reaction di-trans,octa-cis-undecaprenyl diphosphate + H2O = di-trans,octa-cis-undecaprenyl phosphate + phosphate + H(+). Functionally, catalyzes the dephosphorylation of undecaprenyl diphosphate (UPP). Confers resistance to bacitracin. The chain is Undecaprenyl-diphosphatase from Cupriavidus necator (strain ATCC 17699 / DSM 428 / KCTC 22496 / NCIMB 10442 / H16 / Stanier 337) (Ralstonia eutropha).